The chain runs to 552 residues: Urocanate hydratase (552 aa).

Residues 49–50 (GG), Gln-127, 173–175 (GMG), Asp-193, 239–240 (NA), 260–264 (QTSAH), 270–271 (YI), and Tyr-319 contribute to the NAD(+) site. The active site involves Cys-407. Gly-489 is a binding site for NAD(+).

This sequence belongs to the urocanase family. The cofactor is NAD(+).

The protein resides in the cytoplasm. The catalysed reaction is 4-imidazolone-5-propanoate = trans-urocanate + H2O. The protein operates within amino-acid degradation; L-histidine degradation into L-glutamate; N-formimidoyl-L-glutamate from L-histidine: step 2/3. Catalyzes the conversion of urocanate to 4-imidazolone-5-propionate. The chain is Urocanate hydratase from Bacillus cereus (strain AH820).